Reading from the N-terminus, the 307-residue chain is Putative serpin A13 (307 aa).

The N-terminal stretch at 1 to 21 is a signal peptide; it reads MEASRWWLLVTVLMAGAHCVA. 2 N-linked (GlcNAc...) asparagine glycosylation sites follow: Asn-150 and Asn-250.

The protein belongs to the serpin family.

Its subcellular location is the secreted. The chain is Putative serpin A13 (SERPINA13P) from Homo sapiens (Human).